A 308-amino-acid polypeptide reads, in one-letter code: Ankyrin repeat and SOCS box protein 12 (308 aa).

ANK repeat units lie at residues 63 to 92, 96 to 125, 129 to 158, 171 to 200, and 213 to 243; these read IPGTPLRLAASYGHLNCVKVLLEHGADVDS, KAQTPLFTAVSHGHLECVRMLLEAGACPSG, NNCSPVLTASRDGAFAILQELLGHGAEANV, SCSGPLYLAAVYGHLDCFRLLLLYGADPDY, and QPRTLLEICLHHNCEPEYIQLLIDFGANIYL. The region spanning 268–308 is the SOCS box domain; sequence PRSLLSQTRLVIRRSLCRANQSQATDQLDIPPVLISYLKHQ.

It belongs to the ankyrin SOCS box (ASB) family. Interacts with CUL5 and RNF7.

Its pathway is protein modification; protein ubiquitination. Functionally, probable substrate-recognition component of a SCF-like ECS (Elongin-Cullin-SOCS-box protein) E3 ubiquitin-protein ligase complex which mediates the ubiquitination and subsequent proteasomal degradation of target proteins. In Mus musculus (Mouse), this protein is Ankyrin repeat and SOCS box protein 12 (Asb12).